The sequence spans 196 residues: ATP-dependent Clp protease proteolytic subunit (196 aa).

S101 functions as the Nucleophile in the catalytic mechanism. H126 is an active-site residue.

It belongs to the peptidase S14 family. As to quaternary structure, component of the chloroplastic Clp protease core complex.

It localises to the plastid. Its subcellular location is the chloroplast stroma. It catalyses the reaction Hydrolysis of proteins to small peptides in the presence of ATP and magnesium. alpha-casein is the usual test substrate. In the absence of ATP, only oligopeptides shorter than five residues are hydrolyzed (such as succinyl-Leu-Tyr-|-NHMec, and Leu-Tyr-Leu-|-Tyr-Trp, in which cleavage of the -Tyr-|-Leu- and -Tyr-|-Trp bonds also occurs).. Its function is as follows. Cleaves peptides in various proteins in a process that requires ATP hydrolysis. Has a chymotrypsin-like activity. Plays a major role in the degradation of misfolded proteins. The chain is ATP-dependent Clp protease proteolytic subunit from Coffea arabica (Arabian coffee).